Consider the following 474-residue polypeptide: Synaptotagmin-17 (474 aa).

The interval 54–112 (PAQTPPWLVSNRSEDKEGDSDNTTSEPPATPQDTSPDRRRSSSDTSRSTYSLTRRISSL) is disordered. The span at 96–112 (SDTSRSTYSLTRRISSL) shows a compositional bias: low complexity. C2 domains follow at residues 184-310 (QLGM…HWWK) and 321-455 (ELGE…EQWH).

The protein belongs to the synaptotagmin family.

Its subcellular location is the membrane. Functionally, may play a role in dendrite formation by melanocytes. This is Synaptotagmin-17 (syt17) from Xenopus tropicalis (Western clawed frog).